A 371-amino-acid polypeptide reads, in one-letter code: Serine/threonine-protein kinase 17B (371 aa).

A Protein kinase domain is found at 33 to 293 (TLTPKELGRG…AESCLSHSWL (261 aa)). ATP contacts are provided by residues 39-47 (LGRGKFAVV) and Lys62. The active-site Proton acceptor is the Asp158. The segment at 308–345 (SESSQTQDLSLRSSEDKTPKSCNGSCGDREDKENIPED) is disordered. Polar residues predominate over residues 309–319 (ESSQTQDLSLR).

Belongs to the protein kinase superfamily. CAMK Ser/Thr protein kinase family. DAP kinase subfamily. Interacts with CHP1; the interaction induces CHP1 to translocate from the Golgi to the nucleus. Autophosphorylated. Highly expressed in thymus, spleen, and testis, lower levels present in the brain.

Its subcellular location is the nucleus. The protein resides in the cell membrane. It localises to the endoplasmic reticulum-Golgi intermediate compartment. The catalysed reaction is L-seryl-[protein] + ATP = O-phospho-L-seryl-[protein] + ADP + H(+). The enzyme catalyses L-threonyl-[protein] + ATP = O-phospho-L-threonyl-[protein] + ADP + H(+). Its function is as follows. Acts as a positive regulator of apoptosis. Phosphorylates myosin light chains. This is Serine/threonine-protein kinase 17B (Stk17b) from Rattus norvegicus (Rat).